The sequence spans 750 residues: Photosystem I P700 chlorophyll a apoprotein A1 (750 aa).

Helical transmembrane passes span 70 to 93 (VFSA…FHGA), 156 to 179 (LYCT…FHYH), 195 to 219 (LNHH…HVSL), 291 to 309 (IAHH…GHMY), 346 to 369 (WHAQ…HHMY), 385 to 411 (LSLF…IFMV), 433 to 455 (AIIS…LYIH), and 531 to 549 (FLVH…LILL). Residues cysteine 573 and cysteine 582 each coordinate [4Fe-4S] cluster. A run of 2 helical transmembrane segments spans residues 589-610 (HVFL…HFSW) and 664-686 (LSAY…MFLF). Chlorophyll a' is bound at residue histidine 675. The chlorophyll a site is built by methionine 683 and tyrosine 691. Tryptophan 692 lines the phylloquinone pocket. The chain crosses the membrane as a helical span at residues 724 to 744 (AVGVTHYLLGGIATTWAFFLA).

The protein belongs to the PsaA/PsaB family. The PsaA/B heterodimer binds the P700 chlorophyll special pair and subsequent electron acceptors. PSI consists of a core antenna complex that captures photons, and an electron transfer chain that converts photonic excitation into a charge separation. The eukaryotic PSI reaction center is composed of at least 11 subunits. It depends on P700 is a chlorophyll a/chlorophyll a' dimer, A0 is one or more chlorophyll a, A1 is one or both phylloquinones and FX is a shared 4Fe-4S iron-sulfur center. as a cofactor.

It localises to the plastid. It is found in the chloroplast thylakoid membrane. The catalysed reaction is reduced [plastocyanin] + hnu + oxidized [2Fe-2S]-[ferredoxin] = oxidized [plastocyanin] + reduced [2Fe-2S]-[ferredoxin]. Functionally, psaA and PsaB bind P700, the primary electron donor of photosystem I (PSI), as well as the electron acceptors A0, A1 and FX. PSI is a plastocyanin-ferredoxin oxidoreductase, converting photonic excitation into a charge separation, which transfers an electron from the donor P700 chlorophyll pair to the spectroscopically characterized acceptors A0, A1, FX, FA and FB in turn. Oxidized P700 is reduced on the lumenal side of the thylakoid membrane by plastocyanin. This Liriodendron tulipifera (Tuliptree) protein is Photosystem I P700 chlorophyll a apoprotein A1.